A 324-amino-acid polypeptide reads, in one-letter code: PGR5-like protein 1A, chloroplastic (324 aa).

Residues 1–60 (MGSKMLFSLTSPRLFSAVSRKPSSSFSPSPPSPSSRTQWTQLSPGKSISLRRRVFLLPAK) constitute a chloroplast transit peptide. A disordered region spans residues 16–42 (SAVSRKPSSSFSPSPPSPSSRTQWTQL). At 61–198 (ATTEQSGPVG…KVYSDLAVDY (138 aa)) the chain is on the stromal side. C82 and C183 are joined by a disulfide. The chain crosses the membrane as a helical span at residues 199 to 219 (FKMLLLNVPATVVALGLFFFL). Residues 220–236 (DDITGFEITYIMELPEP) lie on the Lumenal, thylakoid side of the membrane. A helical membrane pass occupies residues 237-257 (YSFIFTWFAAVPVIVYLALSI). Residues 258-324 (TKLIIKDFLI…LITLPEGSQA (67 aa)) are Stromal-facing.

This sequence belongs to the PGR5 family. As to quaternary structure, homodimer and heterodimer with PGR5. Interacts with PGR5, FD2, petC, psaD1, LFNR1 and LFNR2. Also interacts with a Fe-containing cofactor (FCC). In terms of processing, disulfide bonds; Cys-300 and Cys-303 are probably involved in the formation of disulfide bridges with 'Cys-11' and 'Cys-105' of PGR5 while Cys-272 and Cys-275 are probably involved in the binding of a Fe-containing cofactor (FCC).

It localises to the plastid. The protein localises to the chloroplast thylakoid membrane. Inhibited by antimycin A. Functionally, ferredoxin-plastoquinone reductase involved in cyclic electron flow (CEF) around photosystem I. The homodimer is probably not involved in CEF. The polypeptide is PGR5-like protein 1A, chloroplastic (PGRL1A) (Arabidopsis thaliana (Mouse-ear cress)).